The sequence spans 451 residues: AAA-ATPase At3g50940 (451 aa).

Residues 1 to 25 (MSSSSESHLATAKTALTAVASVAAA) form the signal peptide. An ATP-binding site is contributed by 254–261 (GPPGTGKS).

Belongs to the AAA ATPase family. BCS1 subfamily. Mg(2+) is required as a cofactor.

The catalysed reaction is ATP + H2O = ADP + phosphate + H(+). This Arabidopsis thaliana (Mouse-ear cress) protein is AAA-ATPase At3g50940.